We begin with the raw amino-acid sequence, 368 residues long: MSAFKPTIKRRESTKIYVGNVPVGGDAPIAVQSMTNTRTTDVEATVAQIKALERVGADIIRVSVPTMEAAEAFKLIKRQSSVPLVADIHFDYRIALKVAEYGVDCLRINPGNIGREDRIRAVVDCAKDKNIPIRIGINAGSLEKDIQEKYGEPTPEALLESALRHVEILDRLNFDQFKVSVKASDVFLAVEAYRLLAKAIKQPLHLGITEAGGARAGAVKSAVGLGMLLAEGIGDTLRVSLAADPVEEIKVGFDILKSLRIRSRGINFIACPTCSRQEFDVIGTVNALEQRLEDIITPMDVSIIGCVVNGPGEALVSDLGVTGGNKKSGFYLNGERQKERFDNEYIVDQLEAKIRAKIAAQDPKNRIL.

Positions 271, 274, 306, and 313 each coordinate [4Fe-4S] cluster.

It belongs to the IspG family. Requires [4Fe-4S] cluster as cofactor.

It carries out the reaction (2E)-4-hydroxy-3-methylbut-2-enyl diphosphate + oxidized [flavodoxin] + H2O + 2 H(+) = 2-C-methyl-D-erythritol 2,4-cyclic diphosphate + reduced [flavodoxin]. It participates in isoprenoid biosynthesis; isopentenyl diphosphate biosynthesis via DXP pathway; isopentenyl diphosphate from 1-deoxy-D-xylulose 5-phosphate: step 5/6. Converts 2C-methyl-D-erythritol 2,4-cyclodiphosphate (ME-2,4cPP) into 1-hydroxy-2-methyl-2-(E)-butenyl 4-diphosphate. The sequence is that of 4-hydroxy-3-methylbut-2-en-1-yl diphosphate synthase (flavodoxin) from Mannheimia succiniciproducens (strain KCTC 0769BP / MBEL55E).